A 449-amino-acid chain; its full sequence is Probable D-serine dehydratase (449 aa).

K119 is modified (N6-(pyridoxal phosphate)lysine).

This sequence belongs to the serine/threonine dehydratase family. DsdA subfamily. Pyridoxal 5'-phosphate is required as a cofactor.

It carries out the reaction D-serine = pyruvate + NH4(+). This chain is Probable D-serine dehydratase, found in Pseudomonas putida (strain ATCC 700007 / DSM 6899 / JCM 31910 / BCRC 17059 / LMG 24140 / F1).